The sequence spans 276 residues: Secretagogin (276 aa).

EF-hand domains lie at 12–47 (LDAA…VLTK), 58–93 (NVWK…EDEN), 105–140 (DSSV…LFLH), 149–184 (KLEE…QENF), 197–232 (ERKR…MMEL), and 240–276 (VDLD…KINP). The Ca(2+) site is built by Asp-71, Ser-73, Asp-75, His-77, Glu-82, Asp-118, Asp-120, Ser-122, Glu-129, Asp-162, Asn-164, Asp-166, Arg-168, Asp-173, Asp-210, Ser-212, Thr-214, Glu-221, Asp-254, Asn-256, Asp-258, Lys-260, and Glu-265.

The protein resides in the cytoplasm. The protein localises to the secreted. Its subcellular location is the cytoplasmic vesicle. It localises to the secretory vesicle membrane. The chain is Secretagogin (SCGN) from Sus scrofa (Pig).